Consider the following 147-residue polypeptide: Bis(5'-nucleosyl)-tetraphosphatase [asymmetrical] (147 aa).

The residue at position 2 (Ala2) is an N-acetylalanine. The Nudix hydrolase domain maps to 2-139 (ALRACGLIIF…EMKATLQEGH (138 aa)). The short motif at 43–64 (GHVDPGENDLETALRETQEETG) is the Nudix box element.

Belongs to the Nudix hydrolase family. A divalent metal cation is required as a cofactor.

It carries out the reaction P(1),P(4)-bis(5'-guanosyl) tetraphosphate + H2O = GMP + GTP + 2 H(+). The catalysed reaction is a 5'-end CoA-ribonucleoside in mRNA + H2O = a 5'-end phospho-adenosine-phospho-ribonucleoside in mRNA + (R)-4'-phosphopantetheine + 2 H(+). It catalyses the reaction a 5'-end FAD-phospho-ribonucleoside in mRNA + H2O = a 5'-end phospho-adenosine-phospho-ribonucleoside in mRNA + FMN + 2 H(+). In terms of biological role, catalyzes the asymmetric hydrolysis of diadenosine 5',5'''-P1,P4-tetraphosphate (Ap4A) to yield AMP and ATP. Exhibits decapping activity towards FAD-capped RNAs and dpCoA-capped RNAs in vitro. The chain is Bis(5'-nucleosyl)-tetraphosphatase [asymmetrical] (Nudt2) from Rattus norvegicus (Rat).